The following is a 255-amino-acid chain: Ribonuclease HII (255 aa).

Residues 72 to 255 form the RNase H type-2 domain; that stretch reads AIICGIDEVG…KSFEPIKSLL (184 aa). A divalent metal cation is bound by residues aspartate 78, glutamate 79, and aspartate 170.

The protein belongs to the RNase HII family. It depends on Mn(2+) as a cofactor. Mg(2+) serves as cofactor.

It is found in the cytoplasm. The catalysed reaction is Endonucleolytic cleavage to 5'-phosphomonoester.. Endonuclease that specifically degrades the RNA of RNA-DNA hybrids. This is Ribonuclease HII from Staphylococcus aureus (strain Mu3 / ATCC 700698).